The following is a 474-amino-acid chain: Bifunctional protein HldE (474 aa).

The ribokinase stretch occupies residues 1 to 318 (MKVTLPDFNK…ENAIRGRADN (318 aa)). 195-198 (NMSE) provides a ligand contact to ATP. The active site involves Asp-264. A cytidylyltransferase region spans residues 344 to 474 (MTNGCFDILH…TNIINAIKKK (131 aa)).

In the N-terminal section; belongs to the carbohydrate kinase PfkB family. This sequence in the C-terminal section; belongs to the cytidylyltransferase family. Homodimer.

The catalysed reaction is D-glycero-beta-D-manno-heptose 7-phosphate + ATP = D-glycero-beta-D-manno-heptose 1,7-bisphosphate + ADP + H(+). The enzyme catalyses D-glycero-beta-D-manno-heptose 1-phosphate + ATP + H(+) = ADP-D-glycero-beta-D-manno-heptose + diphosphate. Its pathway is nucleotide-sugar biosynthesis; ADP-L-glycero-beta-D-manno-heptose biosynthesis; ADP-L-glycero-beta-D-manno-heptose from D-glycero-beta-D-manno-heptose 7-phosphate: step 1/4. The protein operates within nucleotide-sugar biosynthesis; ADP-L-glycero-beta-D-manno-heptose biosynthesis; ADP-L-glycero-beta-D-manno-heptose from D-glycero-beta-D-manno-heptose 7-phosphate: step 3/4. Functionally, catalyzes the phosphorylation of D-glycero-D-manno-heptose 7-phosphate at the C-1 position to selectively form D-glycero-beta-D-manno-heptose-1,7-bisphosphate. Catalyzes the ADP transfer from ATP to D-glycero-beta-D-manno-heptose 1-phosphate, yielding ADP-D-glycero-beta-D-manno-heptose. The chain is Bifunctional protein HldE from Proteus mirabilis (strain HI4320).